Reading from the N-terminus, the 78-residue chain is D-alanyl carrier protein (78 aa).

The region spanning 1-78 (MEFREQVLDL…KIVEVLEELR (78 aa)) is the Carrier domain. O-(pantetheine 4'-phosphoryl)serine is present on serine 36.

Belongs to the DltC family. 4'-phosphopantetheine is transferred from CoA to a specific serine of apo-DCP.

It localises to the cytoplasm. It participates in cell wall biogenesis; lipoteichoic acid biosynthesis. Its function is as follows. Carrier protein involved in the D-alanylation of lipoteichoic acid (LTA). The loading of thioester-linked D-alanine onto DltC is catalyzed by D-alanine--D-alanyl carrier protein ligase DltA. The DltC-carried D-alanyl group is further transferred to cell membrane phosphatidylglycerol (PG) by forming an ester bond, probably catalyzed by DltD. D-alanylation of LTA plays an important role in modulating the properties of the cell wall in Gram-positive bacteria, influencing the net charge of the cell wall. The sequence is that of D-alanyl carrier protein from Staphylococcus xylosus.